Reading from the N-terminus, the 355-residue chain is MRKIIHIDMDCYFAAVEMRDFPQYRGKPLAVGGSSDRRGVISTCNYEARAFGVRSAMASAYALKLCPNLILVPGRMEVYKAVSQQIREIFSRYTSLIEPLSLDEAYLDVSDCSLYQGSATRIAEAIRSDIFKETGLTASAGVSPIKFVAKVASDLNKPNGQYVVSPDTLMHFVRALSLGKIPGVGKVTEEKLNALGLKTCADVQQVPQTLLTEHFGKFGAVLYERAHGRDERAIVSHRERKSVGVETTLPKDLHTREACLDVLSSLIPELNRRLGRSASGRRIHKLVVKLKFDDFRQTTIESRAEEPSVRLFESLLSQAFVRAEGRGIRLVGIAAGLVCRSEAEQEGSAQLALSL.

The region spanning 4-185 is the UmuC domain; sequence IIHIDMDCYF…LSLGKIPGVG (182 aa). Mg(2+) contacts are provided by Asp8 and Asp103. Glu104 is a catalytic residue.

It belongs to the DNA polymerase type-Y family. In terms of assembly, monomer. Mg(2+) is required as a cofactor.

The protein localises to the cytoplasm. It catalyses the reaction DNA(n) + a 2'-deoxyribonucleoside 5'-triphosphate = DNA(n+1) + diphosphate. In terms of biological role, poorly processive, error-prone DNA polymerase involved in untargeted mutagenesis. Copies undamaged DNA at stalled replication forks, which arise in vivo from mismatched or misaligned primer ends. These misaligned primers can be extended by PolIV. Exhibits no 3'-5' exonuclease (proofreading) activity. May be involved in translesional synthesis, in conjunction with the beta clamp from PolIII. The polypeptide is DNA polymerase IV (Shewanella amazonensis (strain ATCC BAA-1098 / SB2B)).